The chain runs to 63 residues: Cytochrome c oxidase subunit 5C (63 aa).

The chain crosses the membrane as a helical span at residues 16 to 34 (VVKEIFIGLTLGLVAGGMW).

It belongs to the cytochrome c oxidase subunit 5C family.

The protein resides in the mitochondrion inner membrane. This protein is one of the nuclear-coded polypeptide chains of cytochrome c oxidase, the terminal oxidase in mitochondrial electron transport. The chain is Cytochrome c oxidase subunit 5C (COX5C) from Hordeum vulgare (Barley).